A 123-amino-acid chain; its full sequence is Small ribosomal subunit protein uS12c (123 aa).

This sequence belongs to the universal ribosomal protein uS12 family. Part of the 30S ribosomal subunit.

It is found in the plastid. The protein localises to the chloroplast. In terms of biological role, with S4 and S5 plays an important role in translational accuracy. Located at the interface of the 30S and 50S subunits. In Huperzia lucidula (Shining clubmoss), this protein is Small ribosomal subunit protein uS12c (rps12).